Here is a 669-residue protein sequence, read N- to C-terminus: JmjC domain-containing histone demethylation protein 1 (669 aa).

Residues 1 to 61 (MTAVAASSRV…RRKKPRTELV (61 aa)) form a disordered region. Composition is skewed to polar residues over residues 16–27 (ASSSAHPRTLRS) and 36–49 (HDSS…QSKQ). The PHD-type zinc-finger motif lies at 65–126 (ELDCAACPAV…KWYCQPCITR (62 aa)). Disordered stretches follow at residues 131–150 (FESG…RPPR) and 220–256 (PPDR…QATH). A compositionally biased stretch (basic residues) spans 246–255 (KPARAKKQAT). The 163-residue stretch at 332-494 (VTGTPMQAYV…TQWKLVEIEE (163 aa)) folds into the JmjC domain. Fe cation contacts are provided by histidine 390 and aspartate 392. A substrate-binding site is contributed by lysine 407. Position 462 (histidine 462) interacts with Fe cation.

This sequence belongs to the JHDM1 histone demethylase family. The cofactor is Fe(2+).

Its subcellular location is the nucleus. It catalyses the reaction N(6),N(6)-dimethyl-L-lysyl(36)-[histone H3] + 2 2-oxoglutarate + 2 O2 = L-lysyl(36)-[histone H3] + 2 formaldehyde + 2 succinate + 2 CO2. Functionally, histone demethylase that specifically demethylates 'Lys-36' of histone H3, thereby playing a central role in histone code. In Mycosarcoma maydis (Corn smut fungus), this protein is JmjC domain-containing histone demethylation protein 1 (JHD1).